The following is a 502-amino-acid chain: MSLRRRKRASPTDLYKTCLQGGDCIPDVKNKFENSTIADWLLKIFGSLVYFGNLGIGSGKGSGGSFGYRPLGSAGSGRPATDLPVTRPNVVIEPIGPQSIVPIDPGASSIVPLVEGGPDISFIAPDAGPGIGGEDIELFTFRDPATDVGGVSGGPTTISTEESETAIIDALPSATTPKQLFYDSYTQTILQTQVNPFLNNAISDTNVFVDPLFAGETIGDNIFEEIPLQNLNFSFPRESTPVKPGRGLRTPAQRSYSRFMEQYPIQAPEFLSQPSRLVQFEFENPAFDPDISIQFQRDVNSLEAAPNPAFADIAYLSRPHMSATSEGLVRVSRIGSRAVLQTRSGLTIGPKVHYYMDLSAISTEAIELQTFADSGHVHTIVDDFLSVTALDDPANIADINYTEDDLLDPLLENFNNSHITVQGVDEEGETVALPIPSITNSSKTFVTDIAENGLFANDTDSLLTPASTIVPAINWFPLFDSYSDFALDPFFIPRKKRRLDIL.

Positions 1-9 match the Nuclear localization signal motif; that stretch reads MSLRRRKRA. Cysteine 18 and cysteine 24 are joined by a disulfide. The Nuclear localization signal motif lies at 493–501; it reads PRKKRRLDI.

Belongs to the papillomaviridae L2 protein family. In terms of assembly, interacts with major capsid protein L1. Interacts with E2; this interaction inhibits E2 transcriptional activity but not the DNA replication function E2. Interacts with host GADD45GIP1. Interacts with host HSPA8; this interaction is required for L2 nuclear translocation. Interacts with host importins KPNB2 and KPNB3. Forms a complex with importin alpha2-beta1 heterodimers via interaction with the importin alpha2 adapter. Interacts with host DYNLT1; this interaction is essential for virus intracellular transport during entry. Interacts (via C-terminus) with host retromer subunits VPS35 and VPS29. Highly phosphorylated.

It is found in the virion. The protein localises to the host nucleus. It localises to the host early endosome. The protein resides in the host Golgi apparatus. Minor protein of the capsid that localizes along the inner surface of the virion, within the central cavities beneath the L1 pentamers. Plays a role in capsid stabilization through interaction with the major capsid protein L1. Once the virion enters the host cell, L2 escorts the genomic DNA into the nucleus by promoting escape from the endosomal compartments and traffic through the host Golgi network. Mechanistically, the C-terminus of L2 possesses a cell-penetrating peptide that protudes from the host endosome, interacts with host cytoplasmic retromer cargo and thereby mediates the capsid delivery to the host trans-Golgi network. Plays a role through its interaction with host dynein in the intracellular microtubule-dependent transport of viral capsid toward the nucleus. Mediates the viral genome import into the nucleus through binding to host importins. Once within the nucleus, L2 localizes viral genomes to host PML bodies in order to activate early gene expression for establishment of infection. Later on, promotes late gene expression by interacting with the viral E2 protein and by inhibiting its transcriptional activation functions. During virion assembly, encapsidates the genome by direct interaction with the viral DNA. The chain is Minor capsid protein L2 from Human papillomavirus type 48.